Consider the following 530-residue polypeptide: UDP-glucuronosyltransferase 2B31 (530 aa).

Residues methionine 1–glycine 24 form the signal peptide. Position 136 is an N6-succinyllysine (lysine 136). The N-linked (GlcNAc...) asparagine glycan is linked to asparagine 316. The chain crosses the membrane as a helical span at residues isoleucine 495–phenylalanine 515.

This sequence belongs to the UDP-glycosyltransferase family.

It is found in the microsome membrane. It localises to the endoplasmic reticulum membrane. It catalyses the reaction glucuronate acceptor + UDP-alpha-D-glucuronate = acceptor beta-D-glucuronoside + UDP + H(+). UDPGTs are of major importance in the conjugation and subsequent elimination of potentially toxic xenobiotics and endogenous compounds. This isozyme has glucuronidating capacity on phenols, opioids, and carboxylic acid-containing drugs. This Canis lupus familiaris (Dog) protein is UDP-glucuronosyltransferase 2B31 (UGT2B31).